The chain runs to 204 residues: MEELEKDKIERNEEMSEEVKGEGPPSELEQSEEVVEEKIETEVEQKKEPSLEEIVEELRKKLEEKEKEAKEYLDIAQRIKAEFDNYRKRTEKEKAEMISYGQEQVIIELLPVIDNFERALANEGDYNSLREGLELIYRQFKKVLDKFEVREIEAEGQMFDPYKHHALAQEEVEGKQPNEIIEVFQKGYYLKDKVIRPSLVKVAK.

Composition is skewed to basic and acidic residues over residues 1–21 (MEELEKDKIERNEEMSEEVKG) and 36–46 (EEKIETEVEQK). Positions 1-46 (MEELEKDKIERNEEMSEEVKGEGPPSELEQSEEVVEEKIETEVEQK) are disordered.

This sequence belongs to the GrpE family. In terms of assembly, homodimer.

The protein localises to the cytoplasm. Its function is as follows. Participates actively in the response to hyperosmotic and heat shock by preventing the aggregation of stress-denatured proteins, in association with DnaK and GrpE. It is the nucleotide exchange factor for DnaK and may function as a thermosensor. Unfolded proteins bind initially to DnaJ; upon interaction with the DnaJ-bound protein, DnaK hydrolyzes its bound ATP, resulting in the formation of a stable complex. GrpE releases ADP from DnaK; ATP binding to DnaK triggers the release of the substrate protein, thus completing the reaction cycle. Several rounds of ATP-dependent interactions between DnaJ, DnaK and GrpE are required for fully efficient folding. This is Protein GrpE from Caldanaerobacter subterraneus subsp. tengcongensis (strain DSM 15242 / JCM 11007 / NBRC 100824 / MB4) (Thermoanaerobacter tengcongensis).